The chain runs to 237 residues: Type II secretion system protein J (237 aa).

Residues 1–6 (MRLQRG) constitute a propeptide, leader sequence. Phe7 carries the post-translational modification N-methylphenylalanine. The helical transmembrane segment at 7-29 (FTLLELLIAIAIFALLALATYRM) threads the bilayer. Residues 203 to 237 (PLKQDQPQGQPGGENGENGEGGVPQPPEGMPGAPE) form a disordered region. Over residues 212 to 224 (QPGGENGENGEGG) the composition is skewed to gly residues. A compositionally biased stretch (pro residues) spans 226-237 (PQPPEGMPGAPE).

Belongs to the GSP J family. In terms of assembly, type II secretion is composed of four main components: the outer membrane complex, the inner membrane complex, the cytoplasmic secretion ATPase and the periplasm-spanning pseudopilus. Forms the tip of the type II pseudopilus by interacting with XcpV, XcpU and XcpX. Interacts with core component XcpT. Cleaved by prepilin peptidase. Post-translationally, methylated by prepilin peptidase at the amino group of the N-terminal phenylalanine once the leader sequence is cleaved by prepilin peptidase.

It localises to the cell inner membrane. In terms of biological role, component of the type II secretion system required for the energy-dependent secretion of extracellular factors such as proteases and toxins from the periplasm. Part of the pseudopilus tip complex that is critical for the recognition and binding of secretion substrates. Type II pseudopilus confers increased bacterial adhesive capabilities. This is Type II secretion system protein J (xcpW) from Pseudomonas aeruginosa (strain ATCC 15692 / DSM 22644 / CIP 104116 / JCM 14847 / LMG 12228 / 1C / PRS 101 / PAO1).